A 306-amino-acid polypeptide reads, in one-letter code: D-alanine--D-alanine ligase (306 aa).

Positions 104–303 (KMLWKAFGLP…FEQLVVKILE (200 aa)) constitute an ATP-grasp domain. Residue 134 to 189 (VAKLGLPLMVKPSLEGSSVGLTKVKAVEELKSAVEYALKFDNTILIEEWLAGDELT) participates in ATP binding. Asp257, Glu270, and Asn272 together coordinate Mg(2+).

The protein belongs to the D-alanine--D-alanine ligase family. Mg(2+) serves as cofactor. Requires Mn(2+) as cofactor.

Its subcellular location is the cytoplasm. The catalysed reaction is 2 D-alanine + ATP = D-alanyl-D-alanine + ADP + phosphate + H(+). It functions in the pathway cell wall biogenesis; peptidoglycan biosynthesis. In terms of biological role, cell wall formation. The polypeptide is D-alanine--D-alanine ligase (Haemophilus influenzae (strain 86-028NP)).